We begin with the raw amino-acid sequence, 354 residues long: Guanine nucleotide-binding protein G(o) subunit alpha (354 aa).

G2 carries N-myristoyl glycine lipidation. C3 carries the S-palmitoyl cysteine lipid modification. Positions 32–354 (KDVKLLLLGA…AYNLRGCGLY (323 aa)) constitute a G-alpha domain. Residues 35–48 (KLLLLGAGESGKST) are G1 motif. GTP is bound by residues E43, K46, S47, T48, S152, L176, R177, T178, and R179. Residue S47 participates in Mg(2+) binding. The interval 174-182 (DILRTRVKT) is G2 motif. A Mg(2+)-binding site is contributed by T182. The segment at 197–206 (FRLFDVGGQR) is G3 motif. A G4 motif region spans residues 266–273 (ILFLNKKD). The GTP site is built by N270, D273, and C325. A G5 motif region spans residues 324–329 (TCATDT).

This sequence belongs to the G-alpha family. G(i/o/t/z) subfamily. G proteins are composed of 3 units; alpha, beta and gamma.

It carries out the reaction GTP + H2O = GDP + phosphate + H(+). Functionally, guanine nucleotide-binding proteins (G proteins) function as transducers downstream of G protein-coupled receptors (GPCRs) in numerous signaling cascades. The alpha chain contains the guanine nucleotide binding site and alternates between an active, GTP-bound state and an inactive, GDP-bound state. Signaling by an activated GPCR promotes GDP release and GTP binding. The alpha subunit has a low GTPase activity that converts bound GTP to GDP, thereby terminating the signal. Both GDP release and GTP hydrolysis are modulated by numerous regulatory proteins. Signaling is mediated via effector proteins, such as adenylate cyclase. Inhibits adenylate cyclase activity, leading to decreased intracellular cAMP levels. The chain is Guanine nucleotide-binding protein G(o) subunit alpha (gna0) from Xenopus laevis (African clawed frog).